Consider the following 382-residue polypeptide: D-galactonate dehydratase (382 aa).

A Mg(2+)-binding site is contributed by D183. The Proton donor role is filled by H185. Mg(2+)-binding residues include E209 and E235. H285 serves as the catalytic Proton acceptor.

This sequence belongs to the mandelate racemase/muconate lactonizing enzyme family. GalD subfamily. Mg(2+) serves as cofactor.

It carries out the reaction D-galactonate = 2-dehydro-3-deoxy-D-galactonate + H2O. It functions in the pathway carbohydrate acid metabolism; D-galactonate degradation; D-glyceraldehyde 3-phosphate and pyruvate from D-galactonate: step 1/3. In terms of biological role, catalyzes the dehydration of D-galactonate to 2-keto-3-deoxy-D-galactonate. This Verminephrobacter eiseniae (strain EF01-2) protein is D-galactonate dehydratase.